Reading from the N-terminus, the 112-residue chain is DNA-directed RNA polymerase subunit Rpo11 (112 aa).

The protein belongs to the archaeal Rpo11/eukaryotic RPB11/RPC19 RNA polymerase subunit family. In terms of assembly, part of the RNA polymerase complex.

It is found in the cytoplasm. The enzyme catalyses RNA(n) + a ribonucleoside 5'-triphosphate = RNA(n+1) + diphosphate. Its function is as follows. DNA-dependent RNA polymerase (RNAP) catalyzes the transcription of DNA into RNA using the four ribonucleoside triphosphates as substrates. In Methanopyrus kandleri (strain AV19 / DSM 6324 / JCM 9639 / NBRC 100938), this protein is DNA-directed RNA polymerase subunit Rpo11.